Reading from the N-terminus, the 642-residue chain is Phosphomethylpyrimidine synthase (642 aa).

Substrate contacts are provided by residues Asn235, Met264, Tyr293, His329, Ser349–Gly351, Asp390–Arg393, and Glu429. Zn(2+) is bound at residue His433. Tyr456 provides a ligand contact to substrate. His497 provides a ligand contact to Zn(2+). [4Fe-4S] cluster-binding residues include Cys577, Cys580, and Cys585.

This sequence belongs to the ThiC family. As to quaternary structure, homodimer. [4Fe-4S] cluster is required as a cofactor.

It catalyses the reaction 5-amino-1-(5-phospho-beta-D-ribosyl)imidazole + S-adenosyl-L-methionine = 4-amino-2-methyl-5-(phosphooxymethyl)pyrimidine + CO + 5'-deoxyadenosine + formate + L-methionine + 3 H(+). The protein operates within cofactor biosynthesis; thiamine diphosphate biosynthesis. Catalyzes the synthesis of the hydroxymethylpyrimidine phosphate (HMP-P) moiety of thiamine from aminoimidazole ribotide (AIR) in a radical S-adenosyl-L-methionine (SAM)-dependent reaction. This chain is Phosphomethylpyrimidine synthase, found in Alteromonas mediterranea (strain DSM 17117 / CIP 110805 / LMG 28347 / Deep ecotype).